Reading from the N-terminus, the 142-residue chain is Large ribosomal subunit protein uL13 (142 aa).

It belongs to the universal ribosomal protein uL13 family. As to quaternary structure, part of the 50S ribosomal subunit.

Its function is as follows. This protein is one of the early assembly proteins of the 50S ribosomal subunit, although it is not seen to bind rRNA by itself. It is important during the early stages of 50S assembly. The protein is Large ribosomal subunit protein uL13 of Buchnera aphidicola subsp. Schizaphis graminum (strain Sg).